We begin with the raw amino-acid sequence, 251 residues long: Outer membrane protein assembly factor BamD (251 aa).

An N-terminal signal peptide occupies residues Met-1–Gly-19. Cys-20 carries N-palmitoyl cysteine lipidation. Cys-20 carries the S-diacylglycerol cysteine lipid modification. TPR repeat units follow at residues Ile-33–Asn-66, Pro-70–Asn-103, and Ala-166–Thr-199.

It belongs to the BamD family. In terms of assembly, part of the Bam complex.

Its subcellular location is the cell outer membrane. Functionally, part of the outer membrane protein assembly complex, which is involved in assembly and insertion of beta-barrel proteins into the outer membrane. The protein is Outer membrane protein assembly factor BamD of Rickettsia prowazekii (strain Madrid E).